The following is a 21-amino-acid chain: Histone H2B 1 (21 aa).

Residues 1–21 (MPDPAKTAPKKGSKKAVTKXA) form a disordered region. Lysine 6 and lysine 11 each carry N6-acetyllysine. Residues 8 to 21 (APKKGSKKAVTKXA) are compositionally biased toward basic residues. Serine 13 is subject to Phosphoserine. Residues lysine 14 and lysine 19 each carry the N6-acetyllysine modification. A Glycyl lysine isopeptide (Lys-Gly) (interchain with G-Cter in ubiquitin) cross-link involves residue lysine 19.

The protein belongs to the histone H2B family. In terms of assembly, the nucleosome is a histone octamer containing two molecules each of H2A, H2B, H3 and H4 assembled in one H3-H4 heterotetramer and two H2A-H2B heterodimers. The octamer wraps approximately 147 bp of DNA. Post-translationally, monoubiquitination at the C-terminal Lys gives a specific tag for epigenetic transcriptional activation and is also prerequisite for histone H3 'Lys-4' and 'Lys-79' methylation. In terms of processing, phosphorylated during apoptosis; which facilitates apoptotic chromatin condensation.

The protein localises to the nucleus. Its subcellular location is the chromosome. Core component of nucleosome. Nucleosomes wrap and compact DNA into chromatin, limiting DNA accessibility to the cellular machineries which require DNA as a template. Histones thereby play a central role in transcription regulation, DNA repair, DNA replication and chromosomal stability. DNA accessibility is regulated via a complex set of post-translational modifications of histones, also called histone code, and nucleosome remodeling. Functionally, has broad-spectrum antimicrobial and antibacterial activity. It is important in the antimicrobial defenses of fish skin and possesses strong activity against saprolegnia, the most common fungal infection in fish. It is also inhibitory to fish bacterial pathogens, such as aeromonas hydrophila, vibrio alginolyticus and E.coli D31. The sequence is that of Histone H2B 1 from Ictalurus punctatus (Channel catfish).